The primary structure comprises 337 residues: Glyceraldehyde-3-phosphate dehydrogenase (337 aa).

NAD(+) contacts are provided by residues Arg12 to Ile13, Asp34, and Arg79. D-glyceraldehyde 3-phosphate-binding positions include Ser150–Thr152, Thr181, Thr210–Gly211, and Arg233. Cys151 (nucleophile) is an active-site residue. Asn315 provides a ligand contact to NAD(+).

This sequence belongs to the glyceraldehyde-3-phosphate dehydrogenase family. In terms of assembly, homotetramer.

The protein resides in the cytoplasm. The enzyme catalyses D-glyceraldehyde 3-phosphate + phosphate + NAD(+) = (2R)-3-phospho-glyceroyl phosphate + NADH + H(+). It participates in carbohydrate degradation; glycolysis; pyruvate from D-glyceraldehyde 3-phosphate: step 1/5. This chain is Glyceraldehyde-3-phosphate dehydrogenase (GPD), found in Coccidioides immitis (strain RS) (Valley fever fungus).